The primary structure comprises 305 residues: Oligopeptide transport ATP-binding protein OppF (305 aa).

Residues 6-251 (LEIKHLKQHF…PLHPYTKSLL (246 aa)) enclose the ABC transporter domain. 42 to 49 (GESGCGKS) is an ATP binding site.

The protein belongs to the ABC transporter superfamily. As to quaternary structure, the complex is composed of two ATP-binding proteins (OppD and OppF), two transmembrane proteins (OppB and OppC) and a solute-binding protein (OppA).

It is found in the cell membrane. The catalysed reaction is a [peptide](out) + ATP + H2O = a [peptide](in) + ADP + phosphate + H(+). Part of the ABC transporter complex OppABCDF involved in the uptake of oligopeptides. Probably responsible for energy coupling to the transport system. Required for genetic competence but not for peptide transport or for sporulation. This chain is Oligopeptide transport ATP-binding protein OppF, found in Bacillus subtilis (strain 168).